A 572-amino-acid chain; its full sequence is Proline--tRNA ligase (572 aa).

It belongs to the class-II aminoacyl-tRNA synthetase family. ProS type 1 subfamily. In terms of assembly, homodimer.

Its subcellular location is the cytoplasm. The enzyme catalyses tRNA(Pro) + L-proline + ATP = L-prolyl-tRNA(Pro) + AMP + diphosphate. In terms of biological role, catalyzes the attachment of proline to tRNA(Pro) in a two-step reaction: proline is first activated by ATP to form Pro-AMP and then transferred to the acceptor end of tRNA(Pro). As ProRS can inadvertently accommodate and process non-cognate amino acids such as alanine and cysteine, to avoid such errors it has two additional distinct editing activities against alanine. One activity is designated as 'pretransfer' editing and involves the tRNA(Pro)-independent hydrolysis of activated Ala-AMP. The other activity is designated 'posttransfer' editing and involves deacylation of mischarged Ala-tRNA(Pro). The misacylated Cys-tRNA(Pro) is not edited by ProRS. In Alteromonas mediterranea (strain DSM 17117 / CIP 110805 / LMG 28347 / Deep ecotype), this protein is Proline--tRNA ligase.